A 204-amino-acid polypeptide reads, in one-letter code: Recombination protein RecR (204 aa).

The C4-type zinc-finger motif lies at 58 to 75 (CSVCQNITDVGVDPCALC). The Toprim domain occupies 83-181 (SVICVVESPV…HVTKIARGIP (99 aa)).

It belongs to the RecR family.

Functionally, may play a role in DNA repair. It seems to be involved in an RecBC-independent recombinational process of DNA repair. It may act with RecF and RecO. The sequence is that of Recombination protein RecR from Pelodictyon phaeoclathratiforme (strain DSM 5477 / BU-1).